The sequence spans 506 residues: Epstein-Barr nuclear antigen leader protein (506 aa).

2 disordered regions span residues 1–470 and 485–506; these read MGDR…PRPP and FEPPTVTTQRQSVYIEEEEDED. S35 is modified (phosphoserine; by host).

It belongs to the lymphocryptovirus EBNA-LP family. In terms of assembly, homooligomer. Interacts with host SP100; this interaction is important for EBNA-LP coactivator activity. Interacts with host HAX1, ERR1 and HSPA2. Interacts with host PRKDC and AKAP8L; these interactions modulate the coactivator function of EBNA-LP. Post-translationally, phosphorylated by the cellular protein kinase cdc2.

The protein resides in the host nucleus. Functionally, plays an important role in the establishment of B-cell immortalization by acting as an EBNA2 coactivator. This transcriptional activation preferentially enhances the expression of the major viral protein LMP1. The interaction between EBNA-LP and host SP100 correlates with coactivation of EBNA2 and the relocalization of SP100 from PML nuclear bodies into nucleoplasm. This is Epstein-Barr nuclear antigen leader protein (EBNA-LP) from Epstein-Barr virus (strain B95-8) (HHV-4).